We begin with the raw amino-acid sequence, 433 residues long: Glutamate--tRNA ligase (433 aa).

Residues 10-20 carry the 'HIGH' region motif; the sequence is PSPTGYLHIGG. The short motif at 211-215 is the 'KMSKS' region element; the sequence is KMSKR. K214 is a binding site for ATP.

Belongs to the class-I aminoacyl-tRNA synthetase family. Glutamate--tRNA ligase type 1 subfamily. As to quaternary structure, monomer.

It is found in the cytoplasm. The catalysed reaction is tRNA(Glu) + L-glutamate + ATP = L-glutamyl-tRNA(Glu) + AMP + diphosphate. Its function is as follows. Catalyzes the attachment of glutamate to tRNA(Glu) in a two-step reaction: glutamate is first activated by ATP to form Glu-AMP and then transferred to the acceptor end of tRNA(Glu). This is Glutamate--tRNA ligase from Akkermansia muciniphila (strain ATCC BAA-835 / DSM 22959 / JCM 33894 / BCRC 81048 / CCUG 64013 / CIP 107961 / Muc).